The sequence spans 397 residues: Potassium channel subfamily K member 4 (397 aa).

At 1-3 (MRS) the chain is on the cytoplasmic side. The chain crosses the membrane as a helical span at residues 4-24 (TTLLALLALVLLYLVSGALVF). The Extracellular portion of the chain corresponds to 25-88 (QALEQPHEQQ…WTNSSNHSSA (64 aa)). Residue N81 is glycosylated (N-linked (GlcNAc...) asparagine). The helical intramembrane region spans 89 to 103 (WNLGSAFFFSGTIIT). Positions 104, 105, 106, and 107 each coordinate K(+). A selectivity filter 1 region spans residues 104–109 (TIGYGN). An intramembrane segment occupies 104–110 (TIGYGNI). At 111 to 118 (ALHTDAGR) the chain is on the extracellular side. A helical membrane pass occupies residues 119–151 (LFCIFYALVGIPLFGMLLAGVGDRLGSSLRRGI). At 152–173 (GHIEAVFLKWHVPPGLVRMLSA) the chain is on the cytoplasmic side. Residues 174–195 (VLFLLIGCLLFVLTPTFVFSYM) traverse the membrane as a helical segment. The Extracellular segment spans residues 196–200 (ESWSK). The segment at residues 201–214 (LEAIYFVIVTLTTV) is an intramembrane region (helical). K(+) is bound by residues T213, V214, G215, and F216. A selectivity filter 2 region spans residues 213-218 (TVGFGD). Residues 215 to 220 (GFGDYV) lie within the membrane without spanning it. The Extracellular segment spans residues 221-234 (PGDGTGQNSPAYQP). The helical transmembrane segment at 235-261 (LVWFWILFGLAYFASVLTTIGNWLRAV) threads the bilayer. The Cytoplasmic portion of the chain corresponds to 262-397 (SRRTRAEMGG…GRLRDKAVPV (136 aa)). Positions 282–292 (TVTARVTQRTG) are enriched in polar residues. The segment at 282 to 397 (TVTARVTQRT…GRLRDKAVPV (116 aa)) is disordered. A compositionally biased stretch (basic residues) spans 369–388 (PRGRRRPNPTKKPSRPRGPG).

Belongs to the two pore domain potassium channel (TC 1.A.1.8) family. In terms of assembly, homodimer; disulfide-linked. Forms heterodimers with other 2-pore domain K(+) channel subunits, such as KCNK2 and KCNK10. As to expression, detected in brain, and at much lower levels in liver, skeletal muscle and testis.

It is found in the cell membrane. The protein resides in the cell projection. It localises to the axon. It carries out the reaction K(+)(in) = K(+)(out). The catalysed reaction is Rb(+)(in) = Rb(+)(out). The enzyme catalyses Cs(+)(in) = Cs(+)(out). Activated by various stimuli including intracellular basic pH, mechanical stretch and heat and polyunsaturated fatty acids such as arachidonic acid. K(+) channel that conducts voltage-dependent outward rectifying currents upon membrane depolarization. Voltage sensing is coupled to K(+) electrochemical gradient in an 'ion flux gating' mode where outward but not inward ion flow opens the gate. Converts to voltage-independent 'leak' conductance mode upon stimulation by various stimuli including mechanical membrane stretch, basic pH, heat and lipids. Homo- and heterodimerizes to form functional channels with distinct regulatory and gating properties. At trigeminal A-beta afferent nerves, the heterodimer of KCNK2/TREK-1 and KCNK4/TRAAK is mostly coexpressed at nodes of Ranvier where it conducts voltage-independent mechanosensitive and thermosensitive currents, allowing rapid action potential repolarization, high speed and high frequence saltatory conduction on myelinated nerves to ensure prompt sensory responses. Permeable to other monovalent cations such as Rb(+) and Cs(+). This is Potassium channel subfamily K member 4 from Rattus norvegicus (Rat).